The chain runs to 111 residues: Putative FAD-linked sulfhydryl oxidase 347L (111 aa).

One can recognise an ERV/ALR sulfhydryl oxidase domain in the interval T2–W109. The cysteines at positions 49 and 52 are disulfide-linked.

Belongs to the IIV-6 347L family. FAD serves as cofactor.

The enzyme catalyses 2 R'C(R)SH + O2 = R'C(R)S-S(R)CR' + H2O2. Its function is as follows. FAD-dependent sulfhydryl oxidase that catalyzes disulfide bond formation. This Invertebrate iridescent virus 6 (IIV-6) protein is Putative FAD-linked sulfhydryl oxidase 347L.